The following is a 65-amino-acid chain: uncharacterized protein (65 aa).

2 helical membrane-spanning segments follow: residues 12-31 (IVKW…LIVV) and 41-63 (LVAR…AIIV).

The protein resides in the cell membrane. This is an uncharacterized protein from Halalkalibacterium halodurans (strain ATCC BAA-125 / DSM 18197 / FERM 7344 / JCM 9153 / C-125) (Bacillus halodurans).